We begin with the raw amino-acid sequence, 485 residues long: Velvet complex subunit B (485 aa).

The Velvet domain maps to 33 to 459 (GRKHYSLEVV…GNQGQKLPLA (427 aa)). The interval 107-353 (VLHPSSVDRH…PPPPRHTYTR (247 aa)) is disordered. Composition is skewed to polar residues over residues 134–155 (APQSRAPANQTPSGGSTPTLSQ), 234–243 (RSPSSSTSDH), 267–304 (SISSYSNSQVDPSVRNHSNSEGIENPGWSSSEATSPHS), and 326–341 (THSQMAPGTCSSQHVS).

It belongs to the velvet family. VelB subfamily. In terms of assembly, component of the heterotrimeric velvet complex composed of laeA, veA and velB; VeA acting as a bridging protein between laeA and velB. Forms a heterodimeric complex with vosA; the formation of the velB-vosA complex is light-dependent.

It localises to the nucleus. The protein localises to the cytoplasm. In terms of biological role, component of the velvet transcription factor complex that controls sexual/asexual developmental ratio in response to light, promoting sexual development in the darkness while stimulating asexual sporulation under illumination. The velvet complex acts as a global regulator for secondary metabolite gene expression. Component of the velB-VosA heterodimeric complex that plays a dual role in activating genes associated with spore maturation and repressing certain development-associated genes. The velB-VosA complex binds DNA through the DNA-binding domain of vosA that recognizes an 11-nucleotide consensus sequence 5'-CTGGCCGCGGC-3' consisting of two motifs in the promoters of key developmental regulatory genes. The chain is Velvet complex subunit B from Laccaria bicolor (strain S238N-H82 / ATCC MYA-4686) (Bicoloured deceiver).